The following is a 655-amino-acid chain: Protein nipi-3 (655 aa).

Residues 1-35 form a disordered region; it reads MARTKCKTKTVANPRTGVRKTAKDLSEPVRQDAVS. A compositionally biased stretch (basic and acidic residues) spans 21-35; sequence TAKDLSEPVRQDAVS. The Protein kinase domain occupies 200-470; the sequence is IGIFVIYGTG…NQVNGDFPEI (271 aa). Residues 206–214 and K235 each bind ATP; that span reads YGTGLVTRA.

Belongs to the protein kinase superfamily. CAMK Ser/Thr protein kinase family. As to quaternary structure, may interact with transcription factor cebp-1 (via N-terminus). In terms of tissue distribution, expressed in epidermis, pharynx, intestine, a subset of head neurons and motoneurons.

It localises to the nucleus. Functionally, adapter protein that regulates different signaling pathways. Required for larval development and viability. Involved in negatively modulating pmk-1 p38/MAPK signaling. Involved in innate immunity, acting either in a manner dependent upon, or independent of, the pmk-1 or pmk-3 p38/MAPK pathways. Has a protective role in response to infection by the Gram-negative bacterium P.aeruginosa, acting by negatively modulating expression of cebp-1, and regulating the pmk-1 p38/MAPK pathway, leading to activation of transcription factor skn-1. Required to prevent P.aeruginosa toxin ToxA-mediated lethality, probably acting via modulating the effects of translational inhibition caused by the toxin. By regulating the up-regulation in the epidermis of antimicrobial peptides nlp-29 and nlp-31, plays a role in resistance to fungal infection. The polypeptide is Protein nipi-3 (Caenorhabditis elegans).